Here is a 419-residue protein sequence, read N- to C-terminus: Tol-Pal system protein TolB (419 aa).

The first 19 residues, 1 to 19, serve as a signal peptide directing secretion; it reads MCNRIISLFLLLFTGQVIA.

This sequence belongs to the TolB family. As to quaternary structure, the Tol-Pal system is composed of five core proteins: the inner membrane proteins TolA, TolQ and TolR, the periplasmic protein TolB and the outer membrane protein Pal. They form a network linking the inner and outer membranes and the peptidoglycan layer.

It is found in the periplasm. Part of the Tol-Pal system, which plays a role in outer membrane invagination during cell division and is important for maintaining outer membrane integrity. The sequence is that of Tol-Pal system protein TolB from Legionella pneumophila (strain Paris).